A 381-amino-acid polypeptide reads, in one-letter code: Succinyl-diaminopimelate desuccinylase (381 aa).

Position 69 (His69) interacts with Zn(2+). Asp71 is an active-site residue. Asp103 contributes to the Zn(2+) binding site. Glu137 functions as the Proton acceptor in the catalytic mechanism. Residues Glu138, Glu166, and His355 each coordinate Zn(2+).

The protein belongs to the peptidase M20A family. DapE subfamily. As to quaternary structure, homodimer. It depends on Zn(2+) as a cofactor. The cofactor is Co(2+).

It carries out the reaction N-succinyl-(2S,6S)-2,6-diaminopimelate + H2O = (2S,6S)-2,6-diaminopimelate + succinate. It functions in the pathway amino-acid biosynthesis; L-lysine biosynthesis via DAP pathway; LL-2,6-diaminopimelate from (S)-tetrahydrodipicolinate (succinylase route): step 3/3. Catalyzes the hydrolysis of N-succinyl-L,L-diaminopimelic acid (SDAP), forming succinate and LL-2,6-diaminopimelate (DAP), an intermediate involved in the bacterial biosynthesis of lysine and meso-diaminopimelic acid, an essential component of bacterial cell walls. This chain is Succinyl-diaminopimelate desuccinylase, found in Rickettsia africae (strain ESF-5).